A 235-amino-acid chain; its full sequence is Probable inactive serine protease 37 (235 aa).

The first 19 residues, 1–19 (MKFTFCLTVLAGTFFSAHS), serve as a signal peptide directing secretion. Positions 20 to 233 (SVQKDDPSPY…YVSWIESTTK (214 aa)) constitute a Peptidase S1 domain. Cystine bridges form between Cys-40-Cys-56, Cys-131-Cys-198, and Cys-163-Cys-177.

The protein belongs to the peptidase S1 family.

It localises to the cytoplasmic vesicle. The protein localises to the secretory vesicle. The protein resides in the acrosome. Its subcellular location is the secreted. Functionally, plays a role in male fertility. May have a role in sperm migration or binding to zona-intact eggs. Involved in the activation of the proacrosin/acrosin system. The protein is Probable inactive serine protease 37 of Bos taurus (Bovine).